We begin with the raw amino-acid sequence, 165 residues long: Phosphopantetheine adenylyltransferase (165 aa).

Position 10 (Ser10) interacts with substrate. ATP-binding positions include 10–11 (SF) and His18. Substrate is bound by residues Lys42, Leu74, and Arg88. ATP is bound by residues 89–91 (GLR), Glu99, and 124–130 (YSFISSS).

The protein belongs to the bacterial CoaD family. Homohexamer. Requires Mg(2+) as cofactor.

It localises to the cytoplasm. The enzyme catalyses (R)-4'-phosphopantetheine + ATP + H(+) = 3'-dephospho-CoA + diphosphate. It functions in the pathway cofactor biosynthesis; coenzyme A biosynthesis; CoA from (R)-pantothenate: step 4/5. Reversibly transfers an adenylyl group from ATP to 4'-phosphopantetheine, yielding dephospho-CoA (dPCoA) and pyrophosphate. This Macrococcus caseolyticus (strain JCSC5402) (Macrococcoides caseolyticum) protein is Phosphopantetheine adenylyltransferase.